The following is a 330-amino-acid chain: Beta-ketoacyl-[acyl-carrier-protein] synthase III (330 aa).

Catalysis depends on residues cysteine 115 and histidine 255. Residues 256–260 (QANFR) form an ACP-binding region. The active site involves asparagine 285.

Belongs to the thiolase-like superfamily. FabH family. As to quaternary structure, homodimer.

Its subcellular location is the cytoplasm. It carries out the reaction malonyl-[ACP] + acetyl-CoA + H(+) = 3-oxobutanoyl-[ACP] + CO2 + CoA. Its pathway is lipid metabolism; fatty acid biosynthesis. Its function is as follows. Catalyzes the condensation reaction of fatty acid synthesis by the addition to an acyl acceptor of two carbons from malonyl-ACP. Catalyzes the first condensation reaction which initiates fatty acid synthesis and may therefore play a role in governing the total rate of fatty acid production. Possesses both acetoacetyl-ACP synthase and acetyl transacylase activities. Its substrate specificity determines the biosynthesis of branched-chain and/or straight-chain of fatty acids. This is Beta-ketoacyl-[acyl-carrier-protein] synthase III from Helicobacter pylori (strain HPAG1).